Consider the following 450-residue polypeptide: Isoleucine 2-epimerase (450 aa).

Pyridoxal 5'-phosphate contacts are provided by residues 115-116 (GS), Tyr-142, and 250-253 (DEVN). An N6-(pyridoxal phosphate)lysine modification is found at Lys-280. Thr-309 lines the pyridoxal 5'-phosphate pocket.

It belongs to the class-III pyridoxal-phosphate-dependent aminotransferase family. Homotetramer. The cofactor is pyridoxal 5'-phosphate.

The enzyme catalyses L-isoleucine = D-allo-isoleucine. In terms of biological role, catalyzes the epimerization of L-isoleucine to D-allo-isoleucine and D-allo-isoleucine to L-isoleucine. Can also catalyze the racemization of many nonpolar amino acids, including leucine and valine. Does not have GABA aminotransferase activity. This is Isoleucine 2-epimerase from Lentilactobacillus buchneri (Lactobacillus buchneri).